A 402-amino-acid chain; its full sequence is Zinc finger CCHC domain-containing protein 12 (402 aa).

Residues 268–277 (DTPDDSDEDV) are compositionally biased toward acidic residues. The segment at 268-342 (DTPDDSDEDV…PGNMRRTRKR (75 aa)) is disordered. The span at 311 to 323 (SPNNSQFPSPCTS) shows a compositional bias: polar residues. The segment at 346 to 363 (IRCSYCGEEGHSKETCDN) adopts a CCHC-type zinc-finger fold. Residues 383 to 392 (HTEERSREAP) are compositionally biased toward basic and acidic residues. The interval 383–402 (HTEERSREAPVEPSDPCELQ) is disordered.

It belongs to the ZCCHC12 family. As to quaternary structure, interacts with SMAD1 and CREB-binding protein (CBP). Forms a protein-DNA complex through its association with SMAD1.

In terms of biological role, transcriptional coactivator in the bone morphogenetic protein (BMP)-signaling pathway. It positively modulates BMP signaling by interacting with SMAD1 and associating with CBP in the transcription complex. It contributes to the BMP-induced enhancement of cholinergic-neuron-specific gene expression. The chain is Zinc finger CCHC domain-containing protein 12 (ZCCHC12) from Bos taurus (Bovine).